Consider the following 682-residue polypeptide: MCGIFAYMNYRVPKTRKEIFETLIRGLQRLEYRGYDSAGVAIDGNNHEVKERHIHLVKKRGKVKALDEELYKQDSMDLKVEFETHFGIAHTRWATHGVPNAVNSHPQRSDKDNEFVVIHNGIITNYKDLRKFLESKGYEFESETDTETIAKLIKYVFDNRETEDITFSTLVERVIQQLEGAFALVFKSIHYPGEAVATRRGSPLLIGVRSKYKLSTEQIPVLYPTCNIENVKNICKTRMKRLDSSTCLHAVGDKAVEFFFASDASAIIEHTNRVIFLEDDDIAAVADGKLSIHRVKRSATDDPSRAIQTLQMELQQIMKGNFSAFMQKEIFEQPESVFNTMRGRVNFETNTVLLGGLKDHLKEIRRCRRLIVIGCGTSYHAAVATRQVLEELTELPVMVELASDFLDRNTPVFRDDVCFFISQSGETADTLLALRYCKDRGALTVGITNTVGSSISRETDCGVHINAGPEIGVASTKAYTSQFISLVMFGLMMSEDRISLQNRRQEIIRGLRSLPELIKEVLSLDEKIHDLALELYTQRSLLVMGRGYNYATCLEGALKIKEITYMHSEGILAGELKHGPLALVDKQMPVIMVIMKDPCFAKCQNALQQVTARQGRPIILCSKDDTESSKFAYKTIELPHTVDCLQGILSVIPLQLLSFHLAVLRGYDVDFPRNLAKSVTVE.

C2 serves as the catalytic For GATase activity. A Glutamine amidotransferase type-2 domain is found at 2-288 (CGIFAYMNYR…DDDIAAVADG (287 aa)). S244 is subject to Phosphoserine. SIS domains lie at 360-499 (HLKE…DRIS) and 531-672 (LALE…VDFP). Substrate is bound by residues 377 to 378 (TS), 422 to 424 (SQS), T427, and H578.

The enzyme catalyses D-fructose 6-phosphate + L-glutamine = D-glucosamine 6-phosphate + L-glutamate. It functions in the pathway nucleotide-sugar biosynthesis; UDP-N-acetyl-alpha-D-glucosamine biosynthesis; alpha-D-glucosamine 6-phosphate from D-fructose 6-phosphate: step 1/1. Controls the flux of glucose into the hexosamine pathway. Most likely involved in regulating the availability of precursors for N- and O-linked glycosylation of proteins. The protein is Glutamine--fructose-6-phosphate aminotransferase [isomerizing] 2 (Gfpt2) of Mus musculus (Mouse).